A 1325-amino-acid chain; its full sequence is MVLRLEGSWSLLVGKRFLSLSGDDDGPWDTERVAEWPWQAGRIRAVSHTDISKPDLKICVEFDDESWEKRRWIEVYSPKMKVFLVEQKLVLAERRSHGGSISPVQWPAMTYKSLVDKAGLGPMVSIRYLGEEKCVFLSKDLLTPIQDVESSRLPLKDDQTVNEEIQALVKKHLDETRLVQGGKNIIGSKIRIYSLDPSTQWFTAVVVNGNPATRTLEVNCQEIPALKTLDPELIHVEIIYDNNGKCDKSKRIGGVKRKPSENSGSVDAKHTKSSPEVSQSQGHVHSVPTVFGEALLGCTPANKDQRHQGLPLPANSPPNLGAETPQGTCRRSVPEVHPSCLNAGTKPLKENLTLFPKVTYITKEQTQNINDQNGKYTSLISSRSSSLSDSTNGKETGLKNISEPLLKPTTNFPKECISAKPLQHLNSSIAIPRVNSSVELQRTLDCRPSTSDAHLLPFTEAGVRSHSGSNSQKGNKVDEHVEMEFFTRRNSNEAFYERNENESFWTGSTKIQDNVIVRKSILADASKVKKLQQSGEAFVQDGSCNNIAPHLHKCRECRLDSYRKNKDQKDSTVFCRFFHFRRLQFNKHGILREEGFLTPNKYDPEAISLWLPLSKNVVGLDLDTAKYILANIGDHFCQLVISEKEVMSTIEPHRQVAWKRAVRGVREMCDVCDTTIFNLRWVCSKCGFGVCVDCYRMRKKGIHEDDDSDTFSWFKCVKGQEHEPENLMPTQIIPGRALYDVGDIVHSVRTKWGIKANCPCANKQFKALSKPTLKEDSKQNLVPGERTSLQQSNLVLSPQLPTHEPPVKPAAGSKQTASVTTSPSLSWLSNITSGNVNKENKEKLLVPISKNENKALQTLPSLAKPAAALQTFNSAILTPVSNNNTGFLRNLLNSSGGKTDNGLKSTPKILDDIFASLVQNRTVTDMPKKPQGLTIKPTIMGFDTPHYWLCDNRLLCLQDPNNESNWNVFRECWKQGQPVMVSGVHHKLNADLWRPESFRKEFGQQEVDLVNCRTNEIITGATVGDFWDGFEDISSRLRTEEGEPMVLKLKDWPPGEDFRDMMPSRFDDLMKNIPLPEYTRRGGKLNLASRLPNYFVRPDLGPKMYNAYGLITPEDRKYGTTNLHLDVSDAANVMVYVGIPKGQADQEEEVLKTIQDGDSDELTIKRFTESREKPGALWHIYAAKDTEKIREFLKKVAEEQGQENPVDHDPIHDQSWYLDRSLRKRLHQEYGVQGWAIVQFLGDVVFIPAGAPHQVHNLYSCIKVAEDFVSPEHVKHCFWLTQEFRYLSHTHTNHEDKLQVKNVIYHAVKDAVGILRANESSLSRS.

3 disordered regions span residues 249–284 (SKRI…QGHV), 300–333 (PANK…RRSV), and 372–399 (QNGK…TGLK). A compositionally biased stretch (polar residues) spans 274–283 (SPEVSQSQGH). Residues 378–390 (SLISSRSSSLSDS) are compositionally biased toward low complexity. The C6-type zinc-finger motif lies at 669 to 694 (CDVCDTTIFNLRWVCSKCGFGVCVDC). Disordered stretches follow at residues 772-791 (TLKE…SLQQ) and 798-819 (PQLP…TASV). Residues 888-892 (LRNLL) carry the LXXLL motif motif. Residues 1062 to 1285 (MPSRFDDLMK…HCFWLTQEFR (224 aa)) form the JmjC domain. Fe cation-binding residues include His-1124, Asp-1126, and His-1253.

It belongs to the JHDM2 histone demethylase family. Fe(2+) serves as cofactor.

It localises to the cytoplasm. The protein localises to the nucleus. The catalysed reaction is N(6),N(6)-dimethyl-L-lysyl(9)-[histone H3] + 2 2-oxoglutarate + 2 O2 = L-lysyl(9)-[histone H3] + 2 formaldehyde + 2 succinate + 2 CO2. Functionally, histone demethylase that specifically demethylates 'Lys-9' of histone H3, thereby playing a central role in histone code. Preferentially demethylates mono- and dimethylated H3 'Lys-9' residue, with a preference for dimethylated residue, while it has weak or no activity on trimethylated H3 'Lys-9'. Demethylation of Lys residue generates formaldehyde and succinate. This is Lysine-specific demethylase 3A (KDM3A) from Gallus gallus (Chicken).